A 436-amino-acid polypeptide reads, in one-letter code: Trigger factor (436 aa).

Residues E161–P246 form the PPIase FKBP-type domain.

This sequence belongs to the FKBP-type PPIase family. Tig subfamily.

Its subcellular location is the cytoplasm. It catalyses the reaction [protein]-peptidylproline (omega=180) = [protein]-peptidylproline (omega=0). Its function is as follows. Involved in protein export. Acts as a chaperone by maintaining the newly synthesized protein in an open conformation. Functions as a peptidyl-prolyl cis-trans isomerase. In Pseudomonas syringae pv. syringae (strain B728a), this protein is Trigger factor.